Here is a 359-residue protein sequence, read N- to C-terminus: Fructose-bisphosphate aldolase class 2 (359 aa).

S61 is a D-glyceraldehyde 3-phosphate binding site. Residue D110 is the Proton donor of the active site. Zn(2+) is bound by residues H111, D145, E175, and H227. G228 serves as a coordination point for dihydroxyacetone phosphate. Zn(2+) is bound at residue H265. Residues 266 to 268 (GGS) and 287 to 290 (NIDT) each bind dihydroxyacetone phosphate.

The protein belongs to the class II fructose-bisphosphate aldolase family. Requires Zn(2+) as cofactor.

It carries out the reaction beta-D-fructose 1,6-bisphosphate = D-glyceraldehyde 3-phosphate + dihydroxyacetone phosphate. Its pathway is carbohydrate degradation; glycolysis; D-glyceraldehyde 3-phosphate and glycerone phosphate from D-glucose: step 4/4. In terms of biological role, catalyzes the aldol condensation of dihydroxyacetone phosphate (DHAP or glycerone-phosphate) with glyceraldehyde 3-phosphate (G3P) to form fructose 1,6-bisphosphate (FBP) in gluconeogenesis and the reverse reaction in glycolysis. This is Fructose-bisphosphate aldolase class 2 (fbaA) from Buchnera aphidicola subsp. Schizaphis graminum (strain Sg).